We begin with the raw amino-acid sequence, 612 residues long: UvrABC system protein C (612 aa).

The region spanning 20 to 98 is the GIY-YIG domain; that stretch reads THSGVYRMLD…IKQHRPKYNI (79 aa). One can recognise a UVR domain in the interval 208–243; the sequence is STVLEEISAKMYQASEDMEYEKAQVYRDQLVVLRKL.

This sequence belongs to the UvrC family. As to quaternary structure, interacts with UvrB in an incision complex.

It localises to the cytoplasm. The UvrABC repair system catalyzes the recognition and processing of DNA lesions. UvrC both incises the 5' and 3' sides of the lesion. The N-terminal half is responsible for the 3' incision and the C-terminal half is responsible for the 5' incision. The chain is UvrABC system protein C from Francisella tularensis subsp. novicida (strain U112).